Consider the following 247-residue polypeptide: Epidermal cell differentiation inhibitor (247 aa).

Residues 1-35 form the signal peptide; it reads MKNKLLFKIFLSLSLALSVYSINDKIIEVSNTSLA. The TR mART core domain occupies 39-247; it reads KNFTDLDEAT…IIITAIVFKK (209 aa). Active-site residues include arginine 120, serine 173, and glutamate 215.

This sequence to ADP-ribosyltransferase C3 of Clostridium.

Inhibits terminal differentiation of cultured mouse keratinocytes. In culture, also inhibits the differentiation of human keratinocytes. Probable ADP-ribosyltransferase. The protein is Epidermal cell differentiation inhibitor of Staphylococcus aureus.